The following is a 345-amino-acid chain: Membrane progestin receptor alpha (345 aa).

At 1–74 the chain is on the cytoplasmic side; it reads MAMAVAQKFN…FQRHNEAVNV (74 aa). A helical membrane pass occupies residues 75 to 95; the sequence is WTHLLAALALLLRLIGLAASV. Topologically, residues 96 to 102 are extracellular; sequence DFREDPH. A helical transmembrane segment spans residues 103 to 123; it reads ALPLFFIVLASFTYLSFSAVA. Residues 124–136 are Cytoplasmic-facing; it reads HLLQAKSEFWHYS. A helical membrane pass occupies residues 137–157; sequence FFFLDYVGVAVYQFGSALAHF. Residues 158 to 168 lie on the Extracellular side of the membrane; sequence YYAIEPSWHDK. A helical membrane pass occupies residues 169–189; it reads VQAIFLPTAAFLAWLSCAGSC. The Cytoplasmic portion of the chain corresponds to 190–243; the sequence is YNKYSQKPGLLGRIFQEAPSALAYVLDISPVLHRIIVSPLPAEEDPALLYHKCQ. Residues 244–264 traverse the membrane as a helical segment; sequence VVFFLLAAAFFSTVMPESWFP. Residues 265-268 lie on the Extracellular side of the membrane; that stretch reads GSCH. The helical transmembrane segment at 269-289 threads the bilayer; sequence IFGQGHQVFHVFLVLCTLAQL. At 290–315 the chain is on the cytoplasmic side; the sequence is EAVTLDYQARRGIYEPLHARWPHNFS. Residues 316–336 traverse the membrane as a helical segment; the sequence is GLFLLTVASSSLTALLLSQLV. Topologically, residues 337 to 345 are extracellular; that stretch reads RRKLHQKTK.

It belongs to the ADIPOR family. As to expression, detected in most adult tissues. Higher expression found in white fat and liver than brown fat and skeletal muscle.

Its subcellular location is the cell membrane. Plasma membrane progesterone (P4) receptor coupled to G proteins. Seems to act through a G(i) mediated pathway. May be involved in oocyte maturation. Involved in neurosteroid inhibition of apoptosis. Also binds dehydroepiandrosterone (DHEA), pregnanolone, pregnenolone and allopregnanolone. The polypeptide is Membrane progestin receptor alpha (Mus musculus (Mouse)).